The sequence spans 107 residues: Nucleoid-associated protein amb4104 (107 aa).

This sequence belongs to the YbaB/EbfC family. As to quaternary structure, homodimer.

It localises to the cytoplasm. Its subcellular location is the nucleoid. Functionally, binds to DNA and alters its conformation. May be involved in regulation of gene expression, nucleoid organization and DNA protection. The sequence is that of Nucleoid-associated protein amb4104 from Paramagnetospirillum magneticum (strain ATCC 700264 / AMB-1) (Magnetospirillum magneticum).